We begin with the raw amino-acid sequence, 436 residues long: Methylenetetrahydrofolate--tRNA-(uracil-5-)-methyltransferase TrmFO (436 aa).

Position 10–15 (10–15 (GAGLAG)) interacts with FAD.

The protein belongs to the MnmG family. TrmFO subfamily. FAD is required as a cofactor.

The protein localises to the cytoplasm. The enzyme catalyses uridine(54) in tRNA + (6R)-5,10-methylene-5,6,7,8-tetrahydrofolate + NADH + H(+) = 5-methyluridine(54) in tRNA + (6S)-5,6,7,8-tetrahydrofolate + NAD(+). It catalyses the reaction uridine(54) in tRNA + (6R)-5,10-methylene-5,6,7,8-tetrahydrofolate + NADPH + H(+) = 5-methyluridine(54) in tRNA + (6S)-5,6,7,8-tetrahydrofolate + NADP(+). Functionally, catalyzes the folate-dependent formation of 5-methyl-uridine at position 54 (M-5-U54) in all tRNAs. This Exiguobacterium sp. (strain ATCC BAA-1283 / AT1b) protein is Methylenetetrahydrofolate--tRNA-(uracil-5-)-methyltransferase TrmFO.